The primary structure comprises 253 residues: Sulfur carrier protein FdhD (253 aa).

C100 acts as the Cysteine persulfide intermediate in catalysis.

The protein belongs to the FdhD family.

It is found in the cytoplasm. Its function is as follows. Required for formate dehydrogenase (FDH) activity. Acts as a sulfur carrier protein that transfers sulfur from IscS to the molybdenum cofactor prior to its insertion into FDH. This is Sulfur carrier protein FdhD from Sulfolobus acidocaldarius (strain ATCC 33909 / DSM 639 / JCM 8929 / NBRC 15157 / NCIMB 11770).